A 350-amino-acid chain; its full sequence is Eukaryotic translation initiation factor 3 subunit I (350 aa).

6 WD repeats span residues 8–49 (GHER…GTLE), 51–89 (HQGVIWSIDVDPETLLCATGGGDLAVKLWTVENGQCVYT), 91–135 (NSPS…ASLT), 149–190 (QNGS…KSLQ), 198–240 (EKNV…KVYK), and 296–335 (GHFGPLNTVAVHPDGTGYSSGGEDGFIRVHTFDKSYKDFL).

It belongs to the eIF-3 subunit I family. As to quaternary structure, component of the eukaryotic translation initiation factor 3 (eIF-3) complex.

The protein resides in the cytoplasm. Component of the eukaryotic translation initiation factor 3 (eIF-3) complex, which is involved in protein synthesis of a specialized repertoire of mRNAs and, together with other initiation factors, stimulates binding of mRNA and methionyl-tRNAi to the 40S ribosome. The eIF-3 complex specifically targets and initiates translation of a subset of mRNAs involved in cell proliferation. This is Eukaryotic translation initiation factor 3 subunit I from Lodderomyces elongisporus (strain ATCC 11503 / CBS 2605 / JCM 1781 / NBRC 1676 / NRRL YB-4239) (Yeast).